Consider the following 773-residue polypeptide: E3 ubiquitin-protein ligase msl-2 (773 aa).

Residues Cys-41, Cys-44, Cys-59, His-61, Cys-64, Cys-67, Cys-78, and Cys-84 each contribute to the Zn(2+) site. The segment at 41–85 (CVVCCQLLVDPYSPKGKRCQHNVCRLCLRGKKHLFPSCTQCEGCS) adopts an RING-type zinc-finger fold. Positions 424–468 (VQTELQDAESLQKDFEDAKAAAEEAKEKEKDLHAISAELQKEDSD) form a coiled coil. The interval 460–525 (AELQKEDSDE…EKVKPPKPKC (66 aa)) is disordered. A CXC MSL2-type domain is found at 520-571 (PPKPKCRCGISGSSNTLTTCRNSRCPCYKSYNSCAGCHCVCCKNPHKEDYVE). The Zn(2+) site is built by Cys-525, Cys-527, Cys-539, Cys-544, Cys-546, Cys-553, Cys-556, Cys-558, and Cys-561. Residues 571 to 773 (ESDEDDDLED…EEIMSGSDDL (203 aa)) form a C-terminal disordered region (CTD) region. The span at 572–581 (SDEDDDLEDF) shows a compositional bias: acidic residues. The segment at 572 to 616 (SDEDDDLEDFEMPKDVPEPMTQSEEPVVAEPRQEENSMAPPDSSA) is disordered. The interval 620–685 (LVPLNNLQQS…SLPQYAYIMP (66 aa)) is clamp-binding domain (CBD). Residues 650–708 (QGSKPLDPVTVGFTIRVQLQHTDGFGSLPQYAYIMPTIDPPNPPAPSLSPPPPPAPDRE) form a pro/Bas region region. Pro residues predominate over residues 687-704 (IDPPNPPAPSLSPPPPPA). Residues 687–773 (IDPPNPPAPS…EEIMSGSDDL (87 aa)) are disordered. Residues 705 to 714 (PDREVIEPPA) show a composition bias toward basic and acidic residues. The span at 715–726 (KKFRTSRTRRGR) shows a compositional bias: basic residues. Residues 742 to 759 (GSRSNSAAGDRSSATDNA) show a composition bias toward polar residues.

Belongs to the MSL2 family. Component of the male-specific lethal (MSL) histone acetyltransferase complex, composed of mof, mle, msl-1, msl-2 and msl-3 proteins, as well as roX1 and roX2 non-coding RNAs. When not associated with chromatin, the MSL complex associates with msl-2 mRNAs, possibly to regulate the amount of available MSL complex. Interacts with Clamp; promoting cooperative binding to DNA PionX sites and recruitment of the MSL complex to chromatin. In terms of processing, autoubiquitinated.

The protein resides in the nucleus. The protein localises to the chromosome. The enzyme catalyses S-ubiquitinyl-[E2 ubiquitin-conjugating enzyme]-L-cysteine + [acceptor protein]-L-lysine = [E2 ubiquitin-conjugating enzyme]-L-cysteine + N(6)-ubiquitinyl-[acceptor protein]-L-lysine.. The protein operates within protein modification; protein ubiquitination. Its function is as follows. Limiting component of the male-specific lethal (MSL) histone acetyltransferase complex, a multiprotein complex essential for elevating transcription of the single X chromosome in the male (X chromosome dosage compensation). The MSL complex specifically associates with the single X chromosome in males and mediates formation of H4K16ac, promoting a two-fold activation of X chromosome. Msl-2 is only produced in males, constituting the limiting component of the MSL complex. Within the MSL complex, msl-2 mediates the selective binding to the X chromosome and recruitment of the MSL complex via two different mechanisms. Recognizes DNA motifs that are enriched on X chromosome, named PionX sites, which are characterized by sequence features and distinct DNA conformation (base roll). Specific recognition of the X chromosome is also mediated by the formation of a gel-like state: msl-2 undergoes liquid-liquid phase separation upon binding to roX1 and roX2 non-coding RNAs, leading to nucleate the MSL complex on the X chromosome. Msl-2 is also required for translation and/or stability of msl-1 in males. Also acts as an E3 ubiquitin ligase: in complex with msl-1, mediates ubiquitination of histone H2B at 'Lys-34' (H2BK34Ub). Also catalyzes ubiquitination of msl-1, msl-3 and mof components of the MSL complex. The polypeptide is E3 ubiquitin-protein ligase msl-2 (Drosophila melanogaster (Fruit fly)).